A 309-amino-acid polypeptide reads, in one-letter code: Gamma-hemolysin component A (309 aa).

The N-terminal stretch at 1–29 (MIKNKILTATLAVGLIAPLANPFIEISKA) is a signal peptide.

This sequence belongs to the aerolysin family. In terms of assembly, toxicity requires sequential binding and synergistic association of a class S and a class F component which form heterooligomeric complexes. HlgA (class S) associates with HlgB (class F) thus forming an AB toxin in strains producing both gamma-hemolysins and leukocidins. HlgA and LukF-PV can also form a complex.

It is found in the secreted. Its function is as follows. Toxin that seems to act by forming pores in the membrane of the cell. Has a hemolytic and a leucotoxic activity. The chain is Gamma-hemolysin component A (hlgA) from Staphylococcus aureus (strain COL).